The primary structure comprises 499 residues: MSDNSTTKVTTNDSPSLTTTTSTTTAPTTTTTTTTTPTHNHDTTIAPGVVKKVYTSGRPPWYDSKGNLKNPLVIGVCGGSASGKTTVCDKIIANLNVRWVVLLSMDSFYKNLSKDNDPSKYNFDHPNAFDYDLMVKTISELRAGKKVNIPKYCFKTHSRLVHQDTVYGADVIILEGILTLYSKELRDLMDIKIFIDTDDDVRLARRLKRDIAERGRTLESVLHQYNTFVKPSFDDYIIPLKKYADIIVPRGSDNIVAINLLTNHIRLKLKERGFDPEKTAQLDLEGLELPSSIHVIKETNQIKAMLSILRNKDTKVGDFVFYSDRLCSLIIEEALTYLPFTEKIVTTPTGSLYHGEELNSRICALVVLRAGGCMEQPLRSICKGIRTGKVLIQSDEMKKPHLFYEKLPNVTDSHVLVLDPTIATGASSEMAIRVLLDHGVPENKIIFVSVIASLKGILYLNYRFPDVQFVVSAIDKELSDEGFILPGCGFYSNRYFGTH.

The segment at 1 to 44 (MSDNSTTKVTTNDSPSLTTTTSTTTAPTTTTTTTTTPTHNHDTT) is disordered. Low complexity predominate over residues 10–38 (TTNDSPSLTTTTSTTTAPTTTTTTTTTPT). 78-85 (GGSASGKT) is a binding site for ATP.

Belongs to the uridine kinase family.

It catalyses the reaction uridine + ATP = UMP + ADP + H(+). The catalysed reaction is cytidine + ATP = CMP + ADP + H(+). It participates in pyrimidine metabolism; CTP biosynthesis via salvage pathway; CTP from cytidine: step 1/3. It functions in the pathway pyrimidine metabolism; UMP biosynthesis via salvage pathway; UMP from uridine: step 1/1. In terms of biological role, catalyzes the conversion of uridine into uridine monophosphate and cytidine into cytidine monophosphate in the pyrimidine salvage pathway. The protein is Uridine-cytidine kinase A (udkA) of Dictyostelium discoideum (Social amoeba).